Reading from the N-terminus, the 281-residue chain is Large ribosomal subunit protein uL2 (281 aa).

A disordered region spans residues 208-281 (AGRSRYAGQR…RGRKRGPHTR (74 aa)). Residues 254–281 (TVGKKTRSHKARSNKFIVRGRKRGPHTR) show a composition bias toward basic residues.

The protein belongs to the universal ribosomal protein uL2 family. In terms of assembly, part of the 50S ribosomal subunit. Forms a bridge to the 30S subunit in the 70S ribosome.

Functionally, one of the primary rRNA binding proteins. Required for association of the 30S and 50S subunits to form the 70S ribosome, for tRNA binding and peptide bond formation. It has been suggested to have peptidyltransferase activity; this is somewhat controversial. Makes several contacts with the 16S rRNA in the 70S ribosome. The polypeptide is Large ribosomal subunit protein uL2 (Limosilactobacillus fermentum (strain NBRC 3956 / LMG 18251) (Lactobacillus fermentum)).